The primary structure comprises 492 residues: UDP-glucosyl transferase 73DL1 (492 aa).

The active-site Proton acceptor is H27. The Charge relay role is filled by D131. UDP-binding residues include W352, V353, H370, T375, E378, and Y392.

The protein belongs to the UDP-glycosyltransferase family. As to expression, mainly expressed in flowers, flower buds and young leaves, and, to a lesser extent, in old leaves, stems and roots.

The protein operates within secondary metabolite biosynthesis; terpenoid biosynthesis. Its function is as follows. Component of the oleanane-type triterpene saponins (e.g. saponarioside A and saponarioside B) biosynthetic pathway, leading to the production of natural products with detergent properties used as traditional sources of soap. A glycosyltransferase that mediates the conversion of QA-mono to QA-di via the elongation of the C-3 sugar chain with a D-galactose. This is UDP-glucosyl transferase 73DL1 from Saponaria officinalis (Common soapwort).